Reading from the N-terminus, the 255-residue chain is 4-hydroxy-tetrahydrodipicolinate reductase (255 aa).

Residues 9 to 14, Asp35, 89 to 91, and 115 to 118 contribute to the NAD(+) site; these read GFKGKM, GTT, and APNF. His145 acts as the Proton donor/acceptor in catalysis. A (S)-2,3,4,5-tetrahydrodipicolinate-binding site is contributed by His146. Residue Lys149 is the Proton donor of the active site. 155 to 156 is a (S)-2,3,4,5-tetrahydrodipicolinate binding site; the sequence is GT.

The protein belongs to the DapB family.

It is found in the cytoplasm. The catalysed reaction is (S)-2,3,4,5-tetrahydrodipicolinate + NAD(+) + H2O = (2S,4S)-4-hydroxy-2,3,4,5-tetrahydrodipicolinate + NADH + H(+). It catalyses the reaction (S)-2,3,4,5-tetrahydrodipicolinate + NADP(+) + H2O = (2S,4S)-4-hydroxy-2,3,4,5-tetrahydrodipicolinate + NADPH + H(+). Its pathway is amino-acid biosynthesis; L-lysine biosynthesis via DAP pathway; (S)-tetrahydrodipicolinate from L-aspartate: step 4/4. Catalyzes the conversion of 4-hydroxy-tetrahydrodipicolinate (HTPA) to tetrahydrodipicolinate. This chain is 4-hydroxy-tetrahydrodipicolinate reductase, found in Streptococcus pneumoniae serotype 4 (strain ATCC BAA-334 / TIGR4).